Here is an 84-residue protein sequence, read N- to C-terminus: Exodeoxyribonuclease 7 small subunit (84 aa).

The protein belongs to the XseB family. In terms of assembly, heterooligomer composed of large and small subunits.

It localises to the cytoplasm. The catalysed reaction is Exonucleolytic cleavage in either 5'- to 3'- or 3'- to 5'-direction to yield nucleoside 5'-phosphates.. Bidirectionally degrades single-stranded DNA into large acid-insoluble oligonucleotides, which are then degraded further into small acid-soluble oligonucleotides. This is Exodeoxyribonuclease 7 small subunit from Yersinia enterocolitica serotype O:8 / biotype 1B (strain NCTC 13174 / 8081).